Here is a 162-residue protein sequence, read N- to C-terminus: NADH-ubiquinone oxidoreductase subunit 8 (162 aa).

4Fe-4S ferredoxin-type domains are found at residues 54–83 (RRYQ…IESE) and 93–122 (TRYD…EGPN). Residues cysteine 63, cysteine 66, cysteine 69, cysteine 73, cysteine 102, cysteine 105, cysteine 108, and cysteine 112 each contribute to the [4Fe-4S] cluster site.

It belongs to the complex I 23 kDa subunit family. [4Fe-4S] cluster serves as cofactor.

Its subcellular location is the mitochondrion. The catalysed reaction is a ubiquinone + NADH + 5 H(+)(in) = a ubiquinol + NAD(+) + 4 H(+)(out). In terms of biological role, core subunit of the mitochondrial membrane respiratory chain NADH dehydrogenase (Complex I) that is believed to belong to the minimal assembly required for catalysis. Complex I functions in the transfer of electrons from NADH to the respiratory chain. The immediate electron acceptor for the enzyme is believed to be ubiquinone. May donate electrons to ubiquinone. This is NADH-ubiquinone oxidoreductase subunit 8 (NAD8) from Reclinomonas americana.